Reading from the N-terminus, the 339-residue chain is Lipoate-protein ligase A (339 aa).

In terms of domain architecture, BPL/LPL catalytic spans 29–217 (PKKQSILFLW…AFFQHYGMKV (189 aa)). Residues Arg71, 76–79 (GAVF), and Lys135 contribute to the ATP site. Lys135 lines the (R)-lipoate pocket.

This sequence belongs to the LplA family. In terms of assembly, monomer.

It localises to the cytoplasm. It catalyses the reaction L-lysyl-[lipoyl-carrier protein] + (R)-lipoate + ATP = N(6)-[(R)-lipoyl]-L-lysyl-[lipoyl-carrier protein] + AMP + diphosphate + H(+). It functions in the pathway protein modification; protein lipoylation via exogenous pathway; protein N(6)-(lipoyl)lysine from lipoate: step 1/2. The protein operates within protein modification; protein lipoylation via exogenous pathway; protein N(6)-(lipoyl)lysine from lipoate: step 2/2. Catalyzes both the ATP-dependent activation of exogenously supplied lipoate to lipoyl-AMP and the transfer of the activated lipoyl onto the lipoyl domains of lipoate-dependent enzymes. The polypeptide is Lipoate-protein ligase A (Blochmanniella pennsylvanica (strain BPEN)).